The primary structure comprises 101 residues: Small ribosomal subunit protein bS18c (101 aa).

Positions 1–19 are enriched in basic residues; it reads MNKSKRPFTKSKRSFRRRL. Residues 1–23 form a disordered region; it reads MNKSKRPFTKSKRSFRRRLPPIQ.

Belongs to the bacterial ribosomal protein bS18 family. As to quaternary structure, part of the 30S ribosomal subunit.

It is found in the plastid. The protein localises to the chloroplast. This chain is Small ribosomal subunit protein bS18c, found in Draba nemorosa (Woodland whitlowgrass).